We begin with the raw amino-acid sequence, 338 residues long: Fructose-1,6-bisphosphatase class 1 1 (338 aa).

Mg(2+) is bound by residues Glu-94, Asp-116, Leu-118, and Asp-119. Substrate contacts are provided by residues 119-122, Asn-210, and Lys-276; that span reads DGSS. A Mg(2+)-binding site is contributed by Glu-282.

It belongs to the FBPase class 1 family. In terms of assembly, homotetramer. Mg(2+) is required as a cofactor.

It is found in the cytoplasm. It carries out the reaction beta-D-fructose 1,6-bisphosphate + H2O = beta-D-fructose 6-phosphate + phosphate. It participates in carbohydrate biosynthesis; gluconeogenesis. The protein is Fructose-1,6-bisphosphatase class 1 1 of Paraburkholderia xenovorans (strain LB400).